A 284-amino-acid chain; its full sequence is Polyamine aminopropyltransferase (284 aa).

A PABS domain is found at 6-242 (KGWFTEVCKE…GWWSATLAGH (237 aa)). Residue Gln36 coordinates S-methyl-5'-thioadenosine. Positions 67 and 91 each coordinate spermidine. S-methyl-5'-thioadenosine is bound by residues Glu111 and 142–143 (DG). The active-site Proton acceptor is the Asp161. 161-164 (DSTD) is a binding site for spermidine.

This sequence belongs to the spermidine/spermine synthase family. Homodimer or homotetramer.

It is found in the cytoplasm. The catalysed reaction is S-adenosyl 3-(methylsulfanyl)propylamine + putrescine = S-methyl-5'-thioadenosine + spermidine + H(+). It functions in the pathway amine and polyamine biosynthesis; spermidine biosynthesis; spermidine from putrescine: step 1/1. In terms of biological role, catalyzes the irreversible transfer of a propylamine group from the amino donor S-adenosylmethioninamine (decarboxy-AdoMet) to putrescine (1,4-diaminobutane) to yield spermidine. The chain is Polyamine aminopropyltransferase from Nitrosococcus oceani (strain ATCC 19707 / BCRC 17464 / JCM 30415 / NCIMB 11848 / C-107).